We begin with the raw amino-acid sequence, 456 residues long: Yersinopine synthase (456 aa).

NADP(+) is bound by residues 12-15 (AGPA), 35-40 (NRPSTK), and Thr-154. Catalysis depends on His-242, which acts as the Proton donor/acceptor.

The protein belongs to the staphylopine dehydrogenase family. In terms of assembly, homodimer.

It carries out the reaction yersinopine + NADP(+) + H2O = (2S)-2-amino-4-{[(1S)-1-carboxy-2-(1H-imidazol-4-yl)ethyl]amino}butanoate + pyruvate + NADPH + H(+). Its function is as follows. Catalyzes the NADPH-dependent reductive condensation of pyruvate to the intermediate formed by the adjacently encoded enzyme y2836, namely (2S)-2-amino-4-{[(1S)-1-carboxy-2-(1H-imidazol-4-yl)ethyl]amino}butanoate, leading to the production of yersinopine. This is the last step in the biosynthesis of the metallophore yersinopine, which is involved in metal acquisition and thus enables bacterial growth inside the host, where metal access is limited. Therefore, this enzyme probably contributes to Yersinia virulence. Cannot use alpha-ketoglutarate in place of pyruvate, and displays only poor efficiency with oxaloacetate and glyoxylate. This is Yersinopine synthase from Yersinia pestis.